We begin with the raw amino-acid sequence, 3046 residues long: Nucleosome-remodeling factor subunit BPTF (3046 aa).

Positions 1–232 (MRGRRGRPPK…DIPPLEFPKS (232 aa)) are disordered. The span at 22–33 (PAPPPPPPPPTS) shows a compositional bias: pro residues. Over residues 62-72 (TRLSSPRGGSS) the composition is skewed to low complexity. Residues 78-87 (PPPPPAPPST) are compositionally biased toward pro residues. A compositionally biased stretch (gly residues) spans 91-110 (GRGGRGGGGGRTGGGGGGGH). Positions 129 to 186 (HESEEEEEEEDMVSEEEEEEDGDAEETQDSEDDEEDEMEEDDDDSDYPEEMEDDDDDA) are enriched in acidic residues. Residues 190–203 (TESSFRSHSTYSST) are compositionally biased toward low complexity. A compositionally biased stretch (basic residues) spans 205–215 (GRRKPRVHRPR). A Phosphoserine modification is found at Ser-216. The DDT domain maps to 240–300 (NEHIMNVIAI…LKAVLREEDT (61 aa)). Residues 390-437 (DDHCRVCHKLGDLLCCETCSAVYHLECVKPPLEEVPEDEWQCEVCVAH) form a PHD-type 1 zinc finger. Basic and acidic residues-rich tracts occupy residues 567 to 609 (IDNV…SDDK) and 616 to 628 (EQGK…EVGD). A disordered region spans residues 567–774 (IDNVKSPEET…GAGKGASGST (208 aa)). The residue at position 572 (Ser-572) is a Phosphoserine. The stretch at 574–604 (EETEKDKNETENDSKDAEKNREEFEDQSLEK) forms a coiled coil. 2 stretches are compositionally biased toward polar residues: residues 631 to 653 (NSVS…SPSE) and 690 to 705 (TCES…SIQP). The segment at 640–749 (NTTNATSEET…PVSIQEEIVG (110 aa)) is interaction with KEAP1. The span at 706–723 (NLENSNSSSELNSSQSES) shows a compositional bias: low complexity. The span at 725 to 738 (KAADDPENGERESH) shows a compositional bias: basic and acidic residues. A phosphoserine mark is found at Ser-763 and Ser-817. An interaction with MAZ region spans residues 839 to 921 (YFKLGQEGKY…QLENNIPSSF (83 aa)). The residue at position 880 (Lys-880) is an N6-acetyllysine. Residues 978–1007 (MTSIEREEKEKVKKKEKKQEEEETMQQATW) are a coiled coil. The segment at 1057–1157 (YRKSLEGTKN…MKTESHVNCQ (101 aa)) is disordered. Thr-1064 carries the post-translational modification Phosphothreonine. Basic and acidic residues-rich tracts occupy residues 1087-1102 (IKIE…KGSD) and 1113-1152 (DISK…KTES). Glycyl lysine isopeptide (Lys-Gly) (interchain with G-Cter in SUMO2) cross-links involve residues Lys-1088, Lys-1138, and Lys-1209. 4 disordered regions span residues 1215–1339 (KGIG…GNDF), 1371–1448 (IVSS…FRTR), 1465–1537 (GEST…NGKD), and 1605–1706 (NSSE…GESK). Composition is skewed to polar residues over residues 1220 to 1232 (TSTN…SESP), 1242 to 1257 (QSDS…ANND), and 1266 to 1285 (CSES…TTNK). Phosphoserine is present on Ser-1231. The segment covering 1287–1305 (YPKDRVLDDVSIRSPETKC) has biased composition (basic and acidic residues). Ser-1300 is subject to Phosphoserine. Phosphothreonine is present on Thr-1303. Ser-1310 carries the post-translational modification Phosphoserine. Positions 1372–1386 (VSSSKSALHSSVPKS) are enriched in low complexity. Composition is skewed to polar residues over residues 1409-1426 (SESN…SIQD) and 1434-1444 (VQNSNESISEQ). Residues 1491-1525 (KKLEERPVNKCSDQIKLKNTTDKKNNENRESEKKG) show a composition bias toward basic and acidic residues. Positions 1629-1656 (TLPSTKESDSTQTTTPSASCPESNSVNQ) are enriched in polar residues. Lys-1730 participates in a covalent cross-link: Glycyl lysine isopeptide (Lys-Gly) (interchain with G-Cter in SUMO2). 2 disordered regions span residues 1973 to 2003 (VPET…TPKQ) and 2041 to 2070 (QAKK…STIS). Positions 2022 to 2050 (EIRAFAERVEKEKAQAVEQQAKKRLEQQK) form a coiled coil. Residues 2054 to 2070 (IATSTTSPTSSTTSTIS) are compositionally biased toward low complexity. Phosphoserine is present on Ser-2098. Arg-2155 is modified (omega-N-methylarginine). Residues 2160-2180 (TIRPNTSGSGGTTSNSQVITG) are disordered. An asymmetric dimethylarginine mark is found at Arg-2162, Arg-2184, and Arg-2191. The segment covering 2232-2256 (VSAPNTVSSTPGQKSLTSATSTSNI) has biased composition (polar residues). Disordered stretches follow at residues 2232-2270 (VSAP…QQGQ), 2346-2549 (TAST…RPQL), 2714-2733 (QAAK…SKQN), and 2795-2858 (PCPP…ISTT). 2 stretches are compositionally biased toward low complexity: residues 2257 to 2270 (QSSA…QQGQ) and 2346 to 2362 (TAST…AGTG). The span at 2363-2375 (EQRQSKLSPQMQV) shows a compositional bias: polar residues. Positions 2391–2431 (PAEAQPQTAQPSAQPQPQTQPQSPAQPEVQTQPEVQTQTTV) are enriched in low complexity. Residues 2432-2485 (SSHVPSEAQPTHAQSSKPQVAAQSQPQSNVQGQSPVRVQSPSQTRIRPSTPSQL) show a composition bias toward polar residues. Residue Ser-2465 is modified to Phosphoserine. The span at 2486 to 2538 (SPGQQSQVQTTTSQPIPIQPHTSLQIPSQGQPQSQPQVQSSTQTLSSGQTLNQ) shows a compositional bias: low complexity. Positions 2706–2732 (DKIDKEEKQAAKKRKREESVEQKRSKQ) form a coiled coil. Residues 2714–2729 (QAAKKRKREESVEQKR) are compositionally biased toward basic and acidic residues. The span at 2795–2818 (PCPPVTPAPPAPPAPPPSPPPPPA) shows a compositional bias: pro residues. The span at 2838-2847 (KREEEKDSSS) shows a compositional bias: basic and acidic residues. The PHD-type 2 zinc finger occupies 2867–2918 (KLYCICKTPYDESKFYIGCDRCQNWYHGRCVGILQSEAELIDEYVCPQCQST). The 105-residue stretch at 2927–3031 (PLTEKDYEGL…SFFVQKLKGF (105 aa)) folds into the Bromo domain.

This sequence belongs to the PBTF family. Interacts with MAZ. Interacts with KEAP1. Component of the NURF-1 ISWI chromatin remodeling complex (also called the nucleosome-remodeling factor (NURF) complex) at least composed of SMARCA1 (isoform 2), BPTF, RBBP4 and RBBP7. Within the complex interacts with isoform 2 of SMARCA1. Component of the BPFT-SMARCA1 complex at least composed of SMARCA1 (isoform 1), BPFT, RBBP4 and RBBP7; the complex is catalytically inactive and does not remodel chromatin. Within the complex interacts with isoform 1 of SMARCA1. Component of the NURF-5 ISWI chromatin remodeling complex at least composed of SMARCA5/SNF2H and BPTF. Within NURF-5 ISWI chromatin remodeling complex interacts with SMARCA5/SNF2H. Phosphorylation enhances DNA-binding. In terms of processing, highly susceptible to proteolysis. In terms of tissue distribution, ubiquitously expressed, with highest levels in testis. Present in kidney, liver and brain. In the brain, highest levels are found in motor cortex (at protein level).

The protein resides in the cytoplasm. It is found in the nucleus. Its function is as follows. Regulatory subunit of the ATP-dependent NURF-1 and NURF-5 ISWI chromatin remodeling complexes, which form ordered nucleosome arrays on chromatin and facilitate access to DNA during DNA-templated processes such as DNA replication, transcription, and repair. The NURF-1 ISWI chromatin remodeling complex has a lower ATP hydrolysis rate than the NURF-5 ISWI chromatin remodeling complex. Within the NURF-1 ISWI chromatin-remodeling complex, binds to the promoters of En1 and En2 to positively regulate their expression and promote brain development. Histone-binding protein which binds to H3 tails trimethylated on 'Lys-4' (H3K4me3), which mark transcription start sites of active genes. Binds to histone H3 tails dimethylated on 'Lys-4' (H3K4Me2) to a lesser extent. May also regulate transcription through direct binding to DNA or transcription factors. The chain is Nucleosome-remodeling factor subunit BPTF (BPTF) from Homo sapiens (Human).